Here is a 242-residue protein sequence, read N- to C-terminus: Small ribosomal subunit protein uS2 (242 aa).

It belongs to the universal ribosomal protein uS2 family.

This is Small ribosomal subunit protein uS2 from Aeromonas salmonicida (strain A449).